The chain runs to 494 residues: Membrane-bound lytic murein transglycosylase F 1 (494 aa).

An N-terminal signal peptide occupies residues 1 to 24; sequence MRIMAVRLVAGAITLALMAYAWLA. Residues 25–270 form a non-LT domain region; the sequence is WERARDPEPI…TLLEEHFGHL (246 aa). Positions 271-494 are LT domain; sequence GRFDYVGFRA…APLPADPPAD (224 aa). Residue E317 is part of the active site. Residues 464-494 are disordered; sequence QVPAGEALGEPPLPTPPAPPGAPLPADPPAD. Positions 474-494 are enriched in pro residues; it reads PPLPTPPAPPGAPLPADPPAD.

The protein in the N-terminal section; belongs to the bacterial solute-binding protein 3 family. In the C-terminal section; belongs to the transglycosylase Slt family.

It is found in the cell outer membrane. It catalyses the reaction Exolytic cleavage of the (1-&gt;4)-beta-glycosidic linkage between N-acetylmuramic acid (MurNAc) and N-acetylglucosamine (GlcNAc) residues in peptidoglycan, from either the reducing or the non-reducing ends of the peptidoglycan chains, with concomitant formation of a 1,6-anhydrobond in the MurNAc residue.. Murein-degrading enzyme that degrades murein glycan strands and insoluble, high-molecular weight murein sacculi, with the concomitant formation of a 1,6-anhydromuramoyl product. Lytic transglycosylases (LTs) play an integral role in the metabolism of the peptidoglycan (PG) sacculus. Their lytic action creates space within the PG sacculus to allow for its expansion as well as for the insertion of various structures such as secretion systems and flagella. This chain is Membrane-bound lytic murein transglycosylase F 1, found in Alkalilimnicola ehrlichii (strain ATCC BAA-1101 / DSM 17681 / MLHE-1).